Reading from the N-terminus, the 421-residue chain is Inhibitor of growth protein 3 (421 aa).

Residues 129-163 (PSQPVNNHHAHSHTPVEKRKYNPTSHHAAADHIPE) are disordered. Glycyl lysine isopeptide (Lys-Gly) (interchain with G-Cter in SUMO2) cross-links involve residues Lys148, Lys165, and Lys167. N6-acetyllysine is present on Lys181. Lys256 is covalently cross-linked (Glycyl lysine isopeptide (Lys-Gly) (interchain with G-Cter in SUMO2)). Lys264 bears the N6-acetyllysine mark. The segment covering 286 to 296 (TQNASSSATDS) has biased composition (polar residues). Positions 286–323 (TQNASSSATDSRSGRKSKNNTKSSSQQSSSSSSSSSSS) are disordered. Residues 308-323 (SSSQQSSSSSSSSSSS) are compositionally biased toward low complexity. Residues 363–412 (PRYCICNQVSYGEMVGCDNQDCPIEWFHYGCVGLTEAPKGKWFCPQCTAA) form a PHD-type zinc finger. Zn(2+) is bound by residues Cys366, Cys368, Cys379, Cys384, His390, Cys393, Cys406, and Cys409.

It belongs to the ING family. In terms of assembly, interacts with H3K4me3 and to a lesser extent with H3K4me2. Component of the NuA4 histone acetyltransferase complex which contains the catalytic subunit KAT5/TIP60 and the subunits EP400, TRRAP/PAF400, BRD8/SMAP, EPC1, DMAP1/DNMAP1, RUVBL1/TIP49, RUVBL2, ING3, actin, ACTL6A/BAF53A, MORF4L1/MRG15, MORF4L2/MRGX, MRGBP, YEATS4/GAS41, VPS72/YL1 and MEAF6. The NuA4 complex interacts with MYC. HTATTIP/TIP60, EPC1, and ING3 together constitute a minimal HAT complex termed Piccolo NuA4. Component of a SWR1-like complex.

The protein localises to the nucleus. Its function is as follows. Component of the NuA4 histone acetyltransferase (HAT) complex which is involved in transcriptional activation of select genes principally by acetylation of nucleosomal histones H4 and H2A. This modification may both alter nucleosome - DNA interactions and promote interaction of the modified histones with other proteins which positively regulate transcription. This complex may be required for the activation of transcriptional programs associated with oncogene and proto-oncogene mediated growth induction, tumor suppressor mediated growth arrest and replicative senescence, apoptosis, and DNA repair. NuA4 may also play a direct role in DNA repair when directly recruited to sites of DNA damage. Component of a SWR1-like complex that specifically mediates the removal of histone H2A.Z/H2AZ1 from the nucleosome. This chain is Inhibitor of growth protein 3 (Ing3), found in Mus musculus (Mouse).